Reading from the N-terminus, the 438-residue chain is Adenylosuccinate synthetase (438 aa).

GTP contacts are provided by residues 13-19 and 41-43; these read GDEGKGK and GHT. D14 acts as the Proton acceptor in catalysis. Mg(2+) is bound by residues D14 and G41. Residues 14 to 17, 39 to 42, T136, R150, Q231, T246, and R310 contribute to the IMP site; these read DEGK and NAGH. H42 serves as the catalytic Proton donor. A substrate-binding site is contributed by 306-312; that stretch reads STTGRRR. GTP contacts are provided by residues R312, 338–340, and 421–423; these read KID and STG.

It belongs to the adenylosuccinate synthetase family. In terms of assembly, homodimer. Requires Mg(2+) as cofactor.

The protein resides in the cytoplasm. It carries out the reaction IMP + L-aspartate + GTP = N(6)-(1,2-dicarboxyethyl)-AMP + GDP + phosphate + 2 H(+). The protein operates within purine metabolism; AMP biosynthesis via de novo pathway; AMP from IMP: step 1/2. Plays an important role in the de novo pathway of purine nucleotide biosynthesis. Catalyzes the first committed step in the biosynthesis of AMP from IMP. The chain is Adenylosuccinate synthetase from Blochmanniella floridana.